The following is a 102-amino-acid chain: Small ribosomal subunit protein uS10 (102 aa).

The protein belongs to the universal ribosomal protein uS10 family. As to quaternary structure, part of the 30S ribosomal subunit.

Its function is as follows. Involved in the binding of tRNA to the ribosomes. The sequence is that of Small ribosomal subunit protein uS10 from Clostridium beijerinckii (strain ATCC 51743 / NCIMB 8052) (Clostridium acetobutylicum).